The following is a 1799-amino-acid chain: Bromodomain and WD repeat-containing protein 3 (1799 aa).

WD repeat units lie at residues 170 to 209 (IKMHKRILGHLSSVYCVAFDRSGRRIFTGSDDCLVKIWAT), 213 to 251 (RLLATLRGHSAEISDMAVNYENTLIAAGSCDKVVRVWCL), 255 to 297 (APVA…FWQW), 307 to 347 (RPVK…IYYL), 353 to 393 (EKIA…IWQY), 400 to 452 (SIVL…VWNS), 456 to 495 (QLLHTLSGHDDEVFVLEAHPFDQRIILSAGHDGNIFIWDL), and 502 to 542 (RNYF…LFGF). Phosphoserine is present on serine 693. Residues 766–912 (KKPSYPIQRN…KKKKGGLVSM (147 aa)) form a disordered region. Basic residues predominate over residues 784–794 (SLRRTQRKRQH). Residues 795-816 (TYLTRSNIEHNSQASSQTSGVQ) show a composition bias toward polar residues. The segment covering 817–828 (EDSDSSSEEDET) has biased composition (acidic residues). Residues 845–858 (SESSSSDSSSEYSD) show a composition bias toward low complexity. The segment covering 875 to 884 (RQATQKIYSS) has biased composition (polar residues). Phosphoserine is present on residues serine 884 and serine 885. A compositionally biased stretch (basic residues) spans 897–907 (KKPKQTKKKKG). One can recognise a Bromo 1 domain in the interval 1136-1243 (WGAHSRDEEC…DVLLRFIGDQ (108 aa)). Disordered stretches follow at residues 1258 to 1291 (EDPDSSDLEEDSEMVDLDSDGPGTSSGRRAKCRG), 1321 to 1366 (EPFR…IDTP), 1435 to 1482 (IQSQ…QNTS), and 1517 to 1723 (SPSS…AKRA). Over residues 1260 to 1276 (PDSSDLEEDSEMVDLDS) the composition is skewed to acidic residues. The region spanning 1298–1427 (CNPDAWKKQC…ALFENHIKNI (130 aa)) is the Bromo 2 domain. The segment covering 1333-1348 (PVQQQQEGESSQSVPP) has biased composition (low complexity). The segment covering 1438 to 1450 (QKRRRPRYRKRLR) has biased composition (basic residues). Composition is skewed to low complexity over residues 1451–1463 (SSSSSLSSSRAPS) and 1517–1530 (SPSSFSGYSRSGNS). Phosphoserine occurs at positions 1574 and 1576. Basic and acidic residues predominate over residues 1584–1596 (GEEKEMKETKEQV). A compositionally biased stretch (low complexity) spans 1598–1623 (LSSSESGELGSSLSSESTSGSDSDSE). Basic and acidic residues predominate over residues 1624-1640 (STSRTDQDYVDGDHDYS). 2 stretches are compositionally biased toward basic residues: residues 1646-1663 (RPKRKLRKQHTNGKRNWK) and 1681-1694 (RGGRGRGGRGRGGR). Phosphoserine is present on serine 1760.

In terms of biological role, plays a role in the regulation of cell morphology and cytoskeletal organization. Required in the control of cell shape. The protein is Bromodomain and WD repeat-containing protein 3 (Brwd3) of Mus musculus (Mouse).